The chain runs to 304 residues: tRNA (guanine(9)-N1)-methyltransferase (304 aa).

Basic and acidic residues-rich tracts occupy residues 1–26 and 42–72; these read MENKDALDIGKDDTNTSEADVSKNET and RQQEWDAGREKRAEMRREKKRLRKEERKRKI. Residues 1–72 are disordered; the sequence is MENKDALDIG…LRKEERKRKI (72 aa). An SAM-dependent MTase TRM10-type domain is found at 81 to 276; it reads QKKRIRLGKV…EVIPKRKGIL (196 aa). Residues leucine 183, glycine 203, 207 to 211, cysteine 215, leucine 229, and 241 to 243 each bind S-adenosyl-L-methionine; these read DKNRY and KIL. The active-site Proton acceptor is the aspartate 207. The interval 282-304 is disordered; it reads SFDVSEDTRSQSNQSDSELEKEN. Serine 296 bears the Phosphoserine mark.

The protein belongs to the class IV-like SAM-binding methyltransferase superfamily. TRM10 family. As to quaternary structure, monomer.

The protein localises to the cytoplasm. It is found in the nucleus. It catalyses the reaction guanosine(9) in tRNA + S-adenosyl-L-methionine = N(1)-methylguanosine(9) in tRNA + S-adenosyl-L-homocysteine + H(+). Its function is as follows. S-adenosyl-L-methionine-dependent guanine N(1)-methyltransferase that catalyzes the formation of N(1)-methylguanine at position 9 (m1G9) in cytoplasmic tRNA. The chain is tRNA (guanine(9)-N1)-methyltransferase from Schizosaccharomyces pombe (strain 972 / ATCC 24843) (Fission yeast).